Reading from the N-terminus, the 210-residue chain is Putative 3-methyladenine DNA glycosylase (210 aa).

Belongs to the DNA glycosylase MPG family.

In Lactobacillus helveticus (strain DPC 4571), this protein is Putative 3-methyladenine DNA glycosylase.